We begin with the raw amino-acid sequence, 615 residues long: ABC transporter G family member 22 (615 aa).

Residues 31–279 enclose the ABC transporter domain; the sequence is ITFKDLAYSV…EIGFPFPDQT (249 aa). 67–74 provides a ligand contact to ATP; it reads GPSGSGKT. Positions 364 to 610 constitute an ABC transmembrane type-2 domain; it reads SNCLVRFAVA…TMVFLCLHYF (247 aa). The next 6 helical transmembrane spans lie at 370–390, 400–420, 442–462, 477–497, 508–528, and 587–607; these read FAVA…LGMD, VLFY…SLFI, LALM…LGTI, FFAM…MLII, FAVG…FVPI, and INLI…FLCL.

Belongs to the ABC transporter superfamily. ABCG family. Eye pigment precursor importer (TC 3.A.1.204) subfamily.

Its subcellular location is the membrane. In terms of biological role, may be involved in cell migration. This chain is ABC transporter G family member 22 (abcG22), found in Dictyostelium discoideum (Social amoeba).